Reading from the N-terminus, the 251-residue chain is Imidazole glycerol phosphate synthase subunit HisF (251 aa).

Residues aspartate 11 and aspartate 130 contribute to the active site.

The protein belongs to the HisA/HisF family. As to quaternary structure, heterodimer of HisH and HisF.

It is found in the cytoplasm. The catalysed reaction is 5-[(5-phospho-1-deoxy-D-ribulos-1-ylimino)methylamino]-1-(5-phospho-beta-D-ribosyl)imidazole-4-carboxamide + L-glutamine = D-erythro-1-(imidazol-4-yl)glycerol 3-phosphate + 5-amino-1-(5-phospho-beta-D-ribosyl)imidazole-4-carboxamide + L-glutamate + H(+). It participates in amino-acid biosynthesis; L-histidine biosynthesis; L-histidine from 5-phospho-alpha-D-ribose 1-diphosphate: step 5/9. Functionally, IGPS catalyzes the conversion of PRFAR and glutamine to IGP, AICAR and glutamate. The HisF subunit catalyzes the cyclization activity that produces IGP and AICAR from PRFAR using the ammonia provided by the HisH subunit. The sequence is that of Imidazole glycerol phosphate synthase subunit HisF from Prosthecochloris aestuarii (strain DSM 271 / SK 413).